Reading from the N-terminus, the 407-residue chain is WEB family protein At3g51720 (407 aa).

3 coiled-coil regions span residues 72-99, 128-217, and 247-278; these read KVLK…DKEN, SVGL…ARAA, and EEIL…EAEE.

The protein belongs to the WEB family.

In Arabidopsis thaliana (Mouse-ear cress), this protein is WEB family protein At3g51720.